Consider the following 158-residue polypeptide: 6,7-dimethyl-8-ribityllumazine synthase (158 aa).

5-amino-6-(D-ribitylamino)uracil-binding positions include Phe-22, 57–59, and 81–83; these read AVE and AVI. 86 to 87 provides a ligand contact to (2S)-2-hydroxy-3-oxobutyl phosphate; that stretch reads GT. The Proton donor role is filled by His-89. Phe-114 is a 5-amino-6-(D-ribitylamino)uracil binding site. (2S)-2-hydroxy-3-oxobutyl phosphate is bound at residue Arg-128.

It belongs to the DMRL synthase family. In terms of assembly, forms an icosahedral capsid composed of 60 subunits, arranged as a dodecamer of pentamers.

It catalyses the reaction (2S)-2-hydroxy-3-oxobutyl phosphate + 5-amino-6-(D-ribitylamino)uracil = 6,7-dimethyl-8-(1-D-ribityl)lumazine + phosphate + 2 H2O + H(+). The protein operates within cofactor biosynthesis; riboflavin biosynthesis; riboflavin from 2-hydroxy-3-oxobutyl phosphate and 5-amino-6-(D-ribitylamino)uracil: step 1/2. Functionally, catalyzes the formation of 6,7-dimethyl-8-ribityllumazine by condensation of 5-amino-6-(D-ribitylamino)uracil with 3,4-dihydroxy-2-butanone 4-phosphate. This is the penultimate step in the biosynthesis of riboflavin. This Shewanella loihica (strain ATCC BAA-1088 / PV-4) protein is 6,7-dimethyl-8-ribityllumazine synthase.